Consider the following 155-residue polypeptide: Ribosome maturation factor RimP (155 aa).

The protein belongs to the RimP family.

Its subcellular location is the cytoplasm. Functionally, required for maturation of 30S ribosomal subunits. The sequence is that of Ribosome maturation factor RimP from Phocaeicola vulgatus (strain ATCC 8482 / DSM 1447 / JCM 5826 / CCUG 4940 / NBRC 14291 / NCTC 11154) (Bacteroides vulgatus).